The primary structure comprises 273 residues: MPELPEVQLAADSLGVQIVGARIVRVERLDWTRMVETPSPDEFITLLAGRQVHGWGRRAKWILLFLDGGWTLALHLRMSGSLTVQPADAPPDKHTHLVLRLDDGRQVFFRDPRKFGRARLLDADGRAALDAAHGDEPLSNAFTVERLAELLRGRKRAIKPLLLDQAVIAGIGNIYADEALWRARIHPLRPASDLSADEVAALHDGIRAALRQALTNGGSTLRDYRNSYGTRGTNQDHFNAYDREGQPCPRCGATIIKTVVAQRGTHYCPECQR.

The active-site Schiff-base intermediate with DNA is the Pro-2. Glu-3 serves as the catalytic Proton donor. Lys-60 (proton donor; for beta-elimination activity) is an active-site residue. Residues His-94, Arg-113, and Arg-154 each contribute to the DNA site. The FPG-type zinc-finger motif lies at 239 to 273 (NAYDREGQPCPRCGATIIKTVVAQRGTHYCPECQR). Arg-263 serves as the catalytic Proton donor; for delta-elimination activity.

It belongs to the FPG family. As to quaternary structure, monomer. Zn(2+) is required as a cofactor.

It catalyses the reaction Hydrolysis of DNA containing ring-opened 7-methylguanine residues, releasing 2,6-diamino-4-hydroxy-5-(N-methyl)formamidopyrimidine.. It carries out the reaction 2'-deoxyribonucleotide-(2'-deoxyribose 5'-phosphate)-2'-deoxyribonucleotide-DNA = a 3'-end 2'-deoxyribonucleotide-(2,3-dehydro-2,3-deoxyribose 5'-phosphate)-DNA + a 5'-end 5'-phospho-2'-deoxyribonucleoside-DNA + H(+). In terms of biological role, involved in base excision repair of DNA damaged by oxidation or by mutagenic agents. Acts as a DNA glycosylase that recognizes and removes damaged bases. Has a preference for oxidized purines, such as 7,8-dihydro-8-oxoguanine (8-oxoG). Has AP (apurinic/apyrimidinic) lyase activity and introduces nicks in the DNA strand. Cleaves the DNA backbone by beta-delta elimination to generate a single-strand break at the site of the removed base with both 3'- and 5'-phosphates. The chain is Formamidopyrimidine-DNA glycosylase from Roseiflexus sp. (strain RS-1).